The chain runs to 664 residues: uncharacterized protein (664 aa).

The N-terminal stretch at 1-25 (MSWKRYLKWVSFAIIPLLFANTSIK) is a signal peptide. Residues 625-645 (IIVYLIIGFSVLVLFITVFIY) traverse the membrane as a helical segment.

Belongs to the MG414/MG415 family.

Its subcellular location is the cell membrane. This is an uncharacterized protein from Mycoplasma genitalium (strain ATCC 33530 / DSM 19775 / NCTC 10195 / G37) (Mycoplasmoides genitalium).